Consider the following 175-residue polypeptide: Pycsar effector protein RsPycTM (175 aa).

3 helical membrane passes run 17–37 (AKNA…ITLL), 44–64 (PLGF…AAII), and 146–166 (AGSL…LFCI).

The protein localises to the cell inner membrane. Functionally, pycsar (pyrimidine cyclase system for antiphage resistance) provides immunity against bacteriophage. The pyrimidine cyclase (PycC) synthesizes cyclic nucleotides in response to infection; these serve as specific second messenger signals. The signals activate the nearby effector, leading to bacterial cell death and abortive phage infection. A clade A Pycsar system. Its function is as follows. The effector gene of a two-gene Pycsar system. Expression of this and uridylate cyclase RsPycC (AC A0A4R2TZQ0) probably confers resistance to bacteriophage. The genes are probably only expressed in response to bacteriophage infection. Probably only responds to cUMP (produced by its cognate NTP cyclase), acts by impairing membrane integrity. The sequence is that of Pycsar effector protein RsPycTM from Rhizobium sp. (strain PP-F2F-G36).